The sequence spans 175 residues: Ribulose bisphosphate carboxylase small subunit, chloroplastic (175 aa).

The transit peptide at 1–46 (MAPSVMASSATTVAPFQGLKSTAGMPVARRSGNSSFGNVSNGGRIR) directs the protein to the chloroplast. The tract at residues 60-64 (ETLSY) is interaction with large subunit.

Belongs to the RuBisCO small chain family. Heterohexadecamer of 8 large and 8 small subunits.

Its subcellular location is the plastid. It is found in the chloroplast. Its function is as follows. RuBisCO catalyzes two reactions: the carboxylation of D-ribulose 1,5-bisphosphate, the primary event in carbon dioxide fixation, as well as the oxidative fragmentation of the pentose substrate. Both reactions occur simultaneously and in competition at the same active site. Although the small subunit is not catalytic it is essential for maximal activity. This is Ribulose bisphosphate carboxylase small subunit, chloroplastic from Oryza sativa subsp. indica (Rice).